Consider the following 153-residue polypeptide: Catabolic 3-dehydroquinase (153 aa).

Tyrosine 24 (proton acceptor) is an active-site residue. Substrate-binding residues include asparagine 75, histidine 81, and aspartate 88. The active-site Proton donor is histidine 101. Residues 102–103 and arginine 112 each bind substrate; that span reads VS.

The protein belongs to the type-II 3-dehydroquinase family. As to quaternary structure, homododecamer. Adopts a ring-like structure, composed of an arrangement of two hexameric rings stacked on top of one another.

The enzyme catalyses 3-dehydroquinate = 3-dehydroshikimate + H2O. It functions in the pathway aromatic compound metabolism; 3,4-dihydroxybenzoate biosynthesis; 3,4-dihydroxybenzoate from 3-dehydroquinate: step 1/2. Functionally, is involved in the catabolism of quinate. Allows the utilization of quinate as carbon source via the beta-ketoadipate pathway. The protein is Catabolic 3-dehydroquinase of Emericella nidulans (strain FGSC A4 / ATCC 38163 / CBS 112.46 / NRRL 194 / M139) (Aspergillus nidulans).